A 109-amino-acid chain; its full sequence is Putative ankyrin repeat protein L482 (109 aa).

ANK repeat units follow at residues 1-26 (YLTE…NITT), 27-56 (NNNY…NIRS), 57-86 (ENNL…DIRS), and 88-109 (NNYA…YLVA).

The sequence is that of Putative ankyrin repeat protein L482 from Acanthamoeba polyphaga (Amoeba).